We begin with the raw amino-acid sequence, 228 residues long: Phosphoglycolate phosphatase (228 aa).

D12 serves as the catalytic Nucleophile. Residues D12, D14, and D177 each coordinate Mg(2+).

The protein belongs to the HAD-like hydrolase superfamily. CbbY/CbbZ/Gph/YieH family. The cofactor is Mg(2+).

It catalyses the reaction 2-phosphoglycolate + H2O = glycolate + phosphate. It participates in organic acid metabolism; glycolate biosynthesis; glycolate from 2-phosphoglycolate: step 1/1. Its function is as follows. Specifically catalyzes the dephosphorylation of 2-phosphoglycolate. Is involved in the dissimilation of the intracellular 2-phosphoglycolate formed during the DNA repair of 3'-phosphoglycolate ends, a major class of DNA lesions induced by oxidative stress. This is Phosphoglycolate phosphatase from Vibrio vulnificus (strain CMCP6).